Here is a 216-residue protein sequence, read N- to C-terminus: Probable succinyl-CoA:3-ketoacid coenzyme A transferase subunit B (216 aa).

The active site involves Glu47.

This sequence belongs to the 3-oxoacid CoA-transferase subunit B family. In terms of assembly, heterodimer of a subunit A and a subunit B.

The catalysed reaction is a 3-oxo acid + succinyl-CoA = a 3-oxoacyl-CoA + succinate. The protein is Probable succinyl-CoA:3-ketoacid coenzyme A transferase subunit B (scoB) of Bacillus subtilis (strain 168).